The chain runs to 676 residues: GRB2-associated-binding protein 2 (676 aa).

S2 bears the Phosphoserine mark. The region spanning 6-117 is the PH domain; the sequence is DVVCTGWLRK…WVQSICQICG (112 aa). A disordered region spans residues 127 to 178; it reads SLRNVSSAGHGPRSSPAELSSSSQHLLRERKSSAPSHSSQPTLFTFEPPVSN. Phosphoserine occurs at positions 133, 140, 141, 148, 149, 159, 164, 210, 218, 223, and 264. Residues 140–149 are compositionally biased toward low complexity; the sequence is SSPAELSSSS. A compositionally biased stretch (polar residues) spans 159-169; the sequence is SAPSHSSQPTL. At T265 the chain carries Phosphothreonine. Y266 bears the Phosphotyrosine mark. T278 carries the phosphothreonine modification. Phosphoserine is present on residues S281 and S285. Position 287 is a phosphothreonine (T287). Residue Y293 is modified to Phosphotyrosine. T331 is subject to Phosphothreonine. Residues 341 to 430 form a disordered region; that stretch reads VATPGDSAIA…RSAESMSDGV (90 aa). The short motif at 351–358 is the SH3-binding element; it reads PPPRPPKP. S368 carries the post-translational modification Phosphoserine. Phosphothreonine occurs at positions 385 and 391. Phosphoserine is present on S405. T408 bears the Phosphothreonine mark. Phosphoserine occurs at positions 422 and 425. Phosphotyrosine is present on Y452. Phosphoserine is present on S480. The tract at residues 492-531 is disordered; the sequence is PSTTLPVHRGPSRGSEIQPPPVNRNLKPDRKAKPTPLDLR. The SH3-binding signature appears at 510 to 519; sequence PPPVNRNLKP. S543 carries the phosphoserine modification. Polar residues-rich tracts occupy residues 556–577 and 589–611; these read FNSS…STDS and NPVS…STGS. 2 disordered regions span residues 556–643 and 656–676; these read FNSS…KVDY and NTMQ…GAKL. A phosphoserine mark is found at S622 and S623. Y643 is modified (phosphotyrosine). The span at 656–670 shows a compositional bias: polar residues; it reads NTMQEWTDVRQSSEP.

The protein belongs to the GAB family. As to quaternary structure, part of a complex composed of EEIG1, TNFRSF11A/RANK, PLCG2, GAB2, TEC and BTK; complex formation increases in the presence of TNFSF11/RANKL. Interacts with SHC1; may mediate interaction with receptors. Interacts with SYK. Interacts with PI-3 kinase. Interacts with GRB2 (via SH3 2 domain). Interacts (phosphorylated) with PTPN11. Interacts with TNFRSF11A (via cytoplasmic domain). Interacts (phosphorylated) with 14-3-3 family proteins SFN, YWHAB, YWHAE, YWHAG, YWHAH, YWHAQ and YWHAZ; prevents interaction with GRB2 and attenuates GAB2 signaling. Interacts with HCK. Post-translationally, phosphorylated on tyrosine residue(s) by the thrombopoietin receptor (TPOR), stem cell factor receptor (SCFR), and T-cell and B-cell antigen receptors, gp130, IL-2R and IL-3R. Phosphorylated upon stimulation of TNFRSF11A/RANK by TNFSF11/RANKL. Phosphorylated upon EGF stimulation. Phosphorylated on tyrosine residues by HCK upon IL6 signaling. Dephosphorylated by PTPN11.

The protein resides in the cytoplasm. The protein localises to the cell membrane. Its subcellular location is the membrane raft. Its function is as follows. Adapter protein which acts downstream of several membrane receptors including cytokine, antigen, hormone, cell matrix and growth factor receptors to regulate multiple signaling pathways. Regulates osteoclast differentiation mediating the TNFRSF11A/RANK signaling. In allergic response, it plays a role in mast cells activation and degranulation through PI-3-kinase regulation. Also involved in the regulation of cell proliferation and hematopoiesis. In Homo sapiens (Human), this protein is GRB2-associated-binding protein 2 (GAB2).